A 376-amino-acid chain; its full sequence is General transcription factor IIH subunit 2 (376 aa).

In terms of domain architecture, VWFA spans 64–206 (HVMIVIDCSR…NIRCSAIGLS (143 aa)). Residues 286-303 (CTQCGARHCSIPAECPVC) form a C4-type zinc finger.

This sequence belongs to the GTF2H2 family. As to quaternary structure, component of the 7-subunit TFIIH core complex composed of xpb-1, xpd-1, gtf-2H1, gtf-2H2C, gtf-2H3, Y73F8A.24 and gtf-2H5, which is active in NER. The core complex associates with the 3-subunit CDK-activating kinase (CAK) module composed of cyh-1, cdk-7 and mnat-1 to form the 10-subunit holoenzyme (holo-TFIIH) active in transcription.

It is found in the nucleus. Component of the general transcription and DNA repair factor IIH (TFIIH) core complex, which is involved in general and transcription-coupled nucleotide excision repair (NER) of damaged DNA and, when complexed to CAK, in RNA transcription by RNA polymerase II. In NER, TFIIH acts by opening DNA around the lesion to allow the excision of the damaged oligonucleotide and its replacement by a new DNA fragment. In transcription, TFIIH has an essential role in transcription initiation. When the pre-initiation complex (PIC) has been established, TFIIH is required for promoter opening and promoter escape. Phosphorylation of the C-terminal tail (CTD) of the largest subunit of RNA polymerase II by the kinase module CAK controls the initiation of transcription. In Caenorhabditis elegans, this protein is General transcription factor IIH subunit 2.